The chain runs to 574 residues: MDKYDKIIDLTKRRGFLWNSFEIYGGIAGFFDYGPLGAILKNNVINTWRKHYIVNEGFYEIDSPTVTPYEVLKASGHVENFTDPLVECKGCLESFRADHIIEENVDVDTEGKTLQELQEMIEKNNIKCPKCGGEFKDVSTFNLMFATSIGPGGKRAAFMRPETAQGIFIQFKRISQFFRNKLPFGAVQIGKAYRNEISPRQGVIRLREFTQAEGEFFIDSRKKENFEKFESVKDTVLPLLSGKNQENESLSAEEKIVRMSLSDAVKNGIIAHEAIAYYIAVTKKFLMEIGIDESKLRFRQHLPNEMAHYAADCWDAELYTDRYGWIECVGIADRTNYDLLAHMKNSGEDLSVFVELDEEHEIEAYEIELNYKLVGRTFKGDAKVLEESLKELDDKKMEELVEALETEGKYTLKTCKRDFELLKEYLTAKKVKKIVKGEKIIPHVIEPSYGIDRITYCVMEHAFKEEEDRTVMGFSNAVSPIKVGVFPLVNKEGMPEIAMDLKNKLRENGLIAEYDDSGAIGRRYMRMDEVGTPFCITIDGETLVDNSVTIRERDSRAQFRIPINEVVSYIKDKL.

Substrate contacts are provided by Arg96 and Glu162. ATP is bound by residues 194–196 (RNE), 204–209 (IRLREF), 327–328 (EC), and 450–453 (GIDR). Substrate is bound at residue 209–213 (FTQAE). 446–450 (EPSYG) provides a ligand contact to substrate.

Belongs to the class-II aminoacyl-tRNA synthetase family.

It localises to the cytoplasm. It catalyses the reaction tRNA(Gly) + glycine + ATP = glycyl-tRNA(Gly) + AMP + diphosphate. In terms of biological role, catalyzes the attachment of glycine to tRNA(Gly). In Methanococcus maripaludis (strain C6 / ATCC BAA-1332), this protein is Glycine--tRNA ligase.